Consider the following 195-residue polypeptide: Nucleoside triphosphate pyrophosphatase (195 aa).

Aspartate 70 acts as the Proton acceptor in catalysis.

The protein belongs to the Maf family. A divalent metal cation serves as cofactor.

It localises to the cytoplasm. It carries out the reaction a ribonucleoside 5'-triphosphate + H2O = a ribonucleoside 5'-phosphate + diphosphate + H(+). It catalyses the reaction a 2'-deoxyribonucleoside 5'-triphosphate + H2O = a 2'-deoxyribonucleoside 5'-phosphate + diphosphate + H(+). In terms of biological role, nucleoside triphosphate pyrophosphatase. May have a dual role in cell division arrest and in preventing the incorporation of modified nucleotides into cellular nucleic acids. In Microcystis aeruginosa (strain NIES-843 / IAM M-2473), this protein is Nucleoside triphosphate pyrophosphatase.